The sequence spans 416 residues: tRNA(Met) cytidine acetate ligase (416 aa).

Residues 7 to 20, Gly-101, Asn-163, and Arg-188 contribute to the ATP site; that span reads VVEY…HLYH.

Belongs to the TmcAL family.

It localises to the cytoplasm. It catalyses the reaction cytidine(34) in elongator tRNA(Met) + acetate + ATP = N(4)-acetylcytidine(34) in elongator tRNA(Met) + AMP + diphosphate. In terms of biological role, catalyzes the formation of N(4)-acetylcytidine (ac(4)C) at the wobble position of elongator tRNA(Met), using acetate and ATP as substrates. First activates an acetate ion to form acetyladenylate (Ac-AMP) and then transfers the acetyl group to tRNA to form ac(4)C34. The protein is tRNA(Met) cytidine acetate ligase of Bacillus licheniformis (strain ATCC 14580 / DSM 13 / JCM 2505 / CCUG 7422 / NBRC 12200 / NCIMB 9375 / NCTC 10341 / NRRL NRS-1264 / Gibson 46).